A 100-amino-acid chain; its full sequence is Small ribosomal subunit protein uS14c (100 aa).

Belongs to the universal ribosomal protein uS14 family. As to quaternary structure, part of the 30S ribosomal subunit.

The protein resides in the plastid. The protein localises to the chloroplast. Binds 16S rRNA, required for the assembly of 30S particles. The polypeptide is Small ribosomal subunit protein uS14c (Lepidium virginicum (Virginia pepperweed)).